Consider the following 388-residue polypeptide: Alanine racemase 3 (388 aa).

Lys-41 serves as the catalytic Proton acceptor; specific for D-alanine. At Lys-41 the chain carries N6-(pyridoxal phosphate)lysine. Arg-135 is a substrate binding site. Tyr-256 functions as the Proton acceptor; specific for L-alanine in the catalytic mechanism. Met-304 lines the substrate pocket.

The protein belongs to the alanine racemase family. The cofactor is pyridoxal 5'-phosphate.

It carries out the reaction L-alanine = D-alanine. The protein operates within amino-acid biosynthesis; D-alanine biosynthesis; D-alanine from L-alanine: step 1/1. Its function is as follows. Catalyzes the interconversion of L-alanine and D-alanine. May also act on other amino acids. The chain is Alanine racemase 3 (alr3) from Mesorhizobium japonicum (strain LMG 29417 / CECT 9101 / MAFF 303099) (Mesorhizobium loti (strain MAFF 303099)).